The primary structure comprises 241 residues: Regulatory protein VirG (241 aa).

Residues 3–117 (HVLVIDDDVA…EFLARIRVAL (115 aa)) form the Response regulatory domain. D52 bears the 4-aspartylphosphate mark. The segment at residues 129–229 (RRSFYFADWT…ARGAGYFFDA (101 aa)) is a DNA-binding region (ompR/PhoB-type).

In terms of processing, phosphorylated by wide host range (WHR) VirA protein.

It is found in the cytoplasm. VirG is required for the positive regulation of at least two vir loci encoded by the Ri plasmid of A.rhizogenes. The chain is Regulatory protein VirG (virG) from Rhizobium rhizogenes (Agrobacterium rhizogenes).